We begin with the raw amino-acid sequence, 108 residues long: UPF0060 membrane protein SA2130 (108 aa).

Transmembrane regions (helical) follow at residues 5-25 (IFIF…IWLW), 31-51 (SSLV…IATF), 60-80 (VYAA…MVVD), and 86-106 (KYDV…LLPS).

The protein belongs to the UPF0060 family.

It is found in the cell membrane. In Staphylococcus aureus (strain N315), this protein is UPF0060 membrane protein SA2130.